The primary structure comprises 137 residues: Envelope glycoprotein L (137 aa).

Positions 1 to 25 (MRTVGVFLATCLVTIFVLPTWGNWA) are cleaved as a signal peptide. An interaction with gH region spans residues 23-128 (NWAYPCCHVT…SVEDLFGANL (106 aa)). Cystine bridges form between C28–C56 and C29–C79.

This sequence belongs to the herpesviridae glycoprotein L family. As to quaternary structure, interacts with glycoprotein H (gH); this interaction is necessary for the correct processing and cell surface expression of gH. The heterodimer gH/gL seems to interact with gB trimers during fusion. The heterodimer gH/gL interacts with host EPHA2 to facilitate virus internalization and fusion.

It is found in the virion membrane. It localises to the host cell membrane. The protein localises to the host Golgi apparatus. The protein resides in the host trans-Golgi network. Functionally, the heterodimer glycoprotein H-glycoprotein L is required for the fusion of viral and plasma membranes leading to virus entry into the host cell. Acts as a functional inhibitor of gH and maintains gH in an inhibited form. Upon binding to host integrins, gL dissociates from gH leading to activation of the viral fusion glycoproteins gB and gH. The heterodimer gH/gL targets also host EPHA2 to promote viral entry. The sequence is that of Envelope glycoprotein L from Epstein-Barr virus (strain AG876) (HHV-4).